A 102-amino-acid chain; its full sequence is Urease subunit beta (102 aa).

Belongs to the urease beta subunit family. In terms of assembly, heterotrimer of UreA (gamma), UreB (beta) and UreC (alpha) subunits. Three heterotrimers associate to form the active enzyme.

It localises to the cytoplasm. It carries out the reaction urea + 2 H2O + H(+) = hydrogencarbonate + 2 NH4(+). It functions in the pathway nitrogen metabolism; urea degradation; CO(2) and NH(3) from urea (urease route): step 1/1. The protein is Urease subunit beta of Clostridium perfringens.